We begin with the raw amino-acid sequence, 122 residues long: Ribosomal protein eL22-like (122 aa).

Serine 112, serine 118, and serine 120 each carry phosphoserine.

This sequence belongs to the eukaryotic ribosomal protein eL22 family.

The protein is Ribosomal protein eL22-like (RPL22L1) of Bos taurus (Bovine).